A 166-amino-acid chain; its full sequence is Phosphopantetheine adenylyltransferase (166 aa).

Serine 8 contacts substrate. ATP is bound by residues 8–9 (SF) and histidine 16. The substrate site is built by lysine 40, threonine 72, and arginine 86. ATP contacts are provided by residues 87–89 (GLR), glutamate 97, and 122–128 (HSFLSSS).

It belongs to the bacterial CoaD family. Homohexamer. It depends on Mg(2+) as a cofactor.

Its subcellular location is the cytoplasm. The enzyme catalyses (R)-4'-phosphopantetheine + ATP + H(+) = 3'-dephospho-CoA + diphosphate. It participates in cofactor biosynthesis; coenzyme A biosynthesis; CoA from (R)-pantothenate: step 4/5. Reversibly transfers an adenylyl group from ATP to 4'-phosphopantetheine, yielding dephospho-CoA (dPCoA) and pyrophosphate. This chain is Phosphopantetheine adenylyltransferase, found in Synechococcus sp. (strain RCC307).